A 316-amino-acid polypeptide reads, in one-letter code: uncharacterized protein (316 aa).

The region spanning 26-98 (ERIDRFLAGA…IPLDVVYEDA (73 aa)) is the S4 RNA-binding domain. Asp148 is an active-site residue.

Belongs to the pseudouridine synthase RluA family.

The catalysed reaction is a uridine in RNA = a pseudouridine in RNA. This is an uncharacterized protein from Chloroflexus aurantiacus (strain ATCC 29366 / DSM 635 / J-10-fl).